The chain runs to 153 residues: SsrA-binding protein (153 aa).

The protein belongs to the SmpB family.

Its subcellular location is the cytoplasm. Its function is as follows. Required for rescue of stalled ribosomes mediated by trans-translation. Binds to transfer-messenger RNA (tmRNA), required for stable association of tmRNA with ribosomes. tmRNA and SmpB together mimic tRNA shape, replacing the anticodon stem-loop with SmpB. tmRNA is encoded by the ssrA gene; the 2 termini fold to resemble tRNA(Ala) and it encodes a 'tag peptide', a short internal open reading frame. During trans-translation Ala-aminoacylated tmRNA acts like a tRNA, entering the A-site of stalled ribosomes, displacing the stalled mRNA. The ribosome then switches to translate the ORF on the tmRNA; the nascent peptide is terminated with the 'tag peptide' encoded by the tmRNA and targeted for degradation. The ribosome is freed to recommence translation, which seems to be the essential function of trans-translation. This Lactobacillus delbrueckii subsp. bulgaricus (strain ATCC 11842 / DSM 20081 / BCRC 10696 / JCM 1002 / NBRC 13953 / NCIMB 11778 / NCTC 12712 / WDCM 00102 / Lb 14) protein is SsrA-binding protein.